An 800-amino-acid chain; its full sequence is Transducin beta-like protein 3 (800 aa).

An N-acetylalanine modification is found at Ala2. 13 WD repeats span residues 64–105 (EDQE…RLWK), 107–146 (IHTA…GTHH), 149–190 (GSPG…CLAV), 193–232 (AHYS…ATRT), 245–284 (LPEE…CVHA), 290–329 (GPGR…LRKQ), 332–372 (GYSE…CQIL), 374–413 (GHTD…EVAC), 419–459 (GHTH…LSKG), 477–516 (CHDK…LLGT), 519–560 (GHRR…KTFE), 562–602 (HDAS…RTLD), and 604–642 (HEDK…EQAE). Ser257 bears the Phosphoserine mark. A Glycyl lysine isopeptide (Lys-Gly) (interchain with G-Cter in SUMO2) cross-link involves residue Lys407.

As to quaternary structure, part of the small subunit (SSU) processome, composed of more than 70 proteins and the RNA chaperone small nucleolar RNA (snoRNA) U3.

The protein localises to the nucleus. It is found in the nucleolus. Its function is as follows. Part of the small subunit (SSU) processome, first precursor of the small eukaryotic ribosomal subunit. During the assembly of the SSU processome in the nucleolus, many ribosome biogenesis factors, an RNA chaperone and ribosomal proteins associate with the nascent pre-rRNA and work in concert to generate RNA folding, modifications, rearrangements and cleavage as well as targeted degradation of pre-ribosomal RNA by the RNA exosome. This is Transducin beta-like protein 3 (TBL3) from Bos taurus (Bovine).